The chain runs to 805 residues: Transmembrane channel-like protein 6 (805 aa).

Positions 1–29 (MAQPLAFILDVPETPGDQGQGPSPYDESE) are disordered. Residues 1–209 (MAQPLAFILD…SCCGRLRYAC (209 aa)) lie on the Lumenal side of the membrane. Thr-89 carries the phosphothreonine modification. At Arg-94 the chain carries Omega-N-methylarginine. A glycan (N-linked (GlcNAc...) asparagine) is linked at Asn-103. The residue at position 105 (Thr-105) is a Phosphothreonine. A helical membrane pass occupies residues 210–230 (VLALHSLGLALLSALQALMPW). Residues 231–249 (RYALKRIGGQFGSSVLSYF) are Cytoplasmic-facing. A helical membrane pass occupies residues 250-270 (LFLKTLLAFNALLLLLLVAFI). Residues 271-338 (MGPQVAFPPA…TPRVGGLPYN (68 aa)) lie on the Lumenal side of the membrane. Asn-312 carries N-linked (GlcNAc...) asparagine glycosylation. Residues 339–359 (MPLAYLSTVGVSFFITCITLV) form a helical membrane-spanning segment. At 360-431 (YSMAHSFGES…RSVCGRLRQA (72 aa)) the chain is on the cytoplasmic side. The helical transmembrane segment at 432-452 (AVLGLVWLLCLGTALGCAVAV) threads the bilayer. The Lumenal portion of the chain corresponds to 453–469 (HVFSEFMIQSPEAAGQE). Residues 470 to 490 (AVLLVLPLVVGLLNLGAPYLC) traverse the membrane as a helical segment. Topologically, residues 491 to 505 (RVLAALEPHDSPVLE) are cytoplasmic. The helical transmembrane segment at 506–526 (VYVAICRNLILKLAILGTLCY) threads the bilayer. Residues 527–553 (HWLGRRVGVLQGQCWEDFVGQELYRFL) lie on the Lumenal side of the membrane. A helical transmembrane segment spans residues 554-574 (VMDFVLMLLDTLFGELVWRII). The Cytoplasmic portion of the chain corresponds to 575–604 (SEKKLKRRRKPEFDIARNVLELIYGQTLTW). The chain crosses the membrane as a helical span at residues 605–625 (LGVLFSPLLPAVQIIKLLLVF). Residues 626 to 650 (YVKKTSLLANCQAPRRPWLASHMST) lie on the Lumenal side of the membrane. Residues 651 to 671 (VFLTLLCFPAFLGAAVFLCYA) traverse the membrane as a helical segment. Topologically, residues 672–722 (VWQVKPSSTCGPFRTLDTMYEAGRVWVRHLEAAGPRVSWLPWVHRYLMENT) are cytoplasmic. The chain crosses the membrane as a helical span at residues 723–743 (FFVFLVSALLLAVIYLNIQVV). The Lumenal segment spans residues 744-805 (RGQRKVICLL…PALLTDEQDA (62 aa)). The interval 778–805 (KEREERSRVGTTEEAAAPPALLTDEQDA) is disordered.

The protein belongs to the TMC family. Interacts with TMC8. Interacts and forms a complex with TMC8 and CIB1; the interaction stabilizes each component of the complex. Interacts and forms a complex with TMC8 and SLC30A1/ZNT1; the interaction regulates zinc transport into the ER. In terms of assembly, (Microbial infection) Interacts with human papillomavirus 16/HPV16 protein E5; the interaction alleviates TMC6-mediated transcription factors inhibition. Expressed in placenta, prostate, testis, activated T-lymphocytes and lymphokine-activated killer (LAK) lymphocytes.

Its subcellular location is the endoplasmic reticulum membrane. The protein localises to the golgi apparatus membrane. It localises to the nucleus membrane. Acts as a regulatory protein involved in the regulation of numerous cellular processes. Together with its homolog TMC8/EVER2, forms a complex with CIB1 in lymphocytes and keratynocytes where TMC6 and TMC8 stabilize CIB1 and reciprocally. Together with TMC8, also forms a complex with and activates zinc transporter ZNT1 at the ER membrane of keratynocytes, thereby facilitating zinc uptake into the ER. Down-regulates the activity of transcription factors induced by zinc and cytokines. Also plays a role in thermal sensation by inhibiting the M-channel (KCNQ2-KCNQ3 channel) current in primary sensory neurons. This is Transmembrane channel-like protein 6 from Homo sapiens (Human).